Reading from the N-terminus, the 428-residue chain is Adenylosuccinate synthetase (428 aa).

GTP is bound by residues 12–18 (GDEGKGK) and 40–42 (GHT). Asp-13 serves as the catalytic Proton acceptor. Residues Asp-13 and Gly-40 each contribute to the Mg(2+) site. Residues 13-16 (DEGK), 38-41 (NAGH), Thr-128, Arg-142, Gln-222, Thr-237, and Arg-301 contribute to the IMP site. His-41 acts as the Proton donor in catalysis. 297 to 303 (VNTGRAR) is a substrate binding site. GTP-binding positions include Arg-303, 329–331 (KLD), and 411–413 (STS).

It belongs to the adenylosuccinate synthetase family. As to quaternary structure, homodimer. The cofactor is Mg(2+).

Its subcellular location is the cytoplasm. The enzyme catalyses IMP + L-aspartate + GTP = N(6)-(1,2-dicarboxyethyl)-AMP + GDP + phosphate + 2 H(+). It participates in purine metabolism; AMP biosynthesis via de novo pathway; AMP from IMP: step 1/2. Its function is as follows. Plays an important role in the de novo pathway of purine nucleotide biosynthesis. Catalyzes the first committed step in the biosynthesis of AMP from IMP. The chain is Adenylosuccinate synthetase from Caulobacter sp. (strain K31).